Consider the following 309-residue polypeptide: Porphobilinogen deaminase (309 aa).

S-(dipyrrolylmethanemethyl)cysteine is present on C241.

Belongs to the HMBS family. As to quaternary structure, monomer. Dipyrromethane serves as cofactor.

It carries out the reaction 4 porphobilinogen + H2O = hydroxymethylbilane + 4 NH4(+). The protein operates within porphyrin-containing compound metabolism; protoporphyrin-IX biosynthesis; coproporphyrinogen-III from 5-aminolevulinate: step 2/4. Tetrapolymerization of the monopyrrole PBG into the hydroxymethylbilane pre-uroporphyrinogen in several discrete steps. This Desulforudis audaxviator (strain MP104C) protein is Porphobilinogen deaminase.